We begin with the raw amino-acid sequence, 223 residues long: Endonuclease V (223 aa).

Residues D35 and D103 each contribute to the Mg(2+) site.

It belongs to the endonuclease V family. Requires Mg(2+) as cofactor.

It is found in the cytoplasm. It carries out the reaction Endonucleolytic cleavage at apurinic or apyrimidinic sites to products with a 5'-phosphate.. In terms of biological role, DNA repair enzyme involved in the repair of deaminated bases. Selectively cleaves double-stranded DNA at the second phosphodiester bond 3' to a deoxyinosine leaving behind the intact lesion on the nicked DNA. The sequence is that of Endonuclease V from Salmonella schwarzengrund (strain CVM19633).